The sequence spans 86 residues: Acyl carrier protein (86 aa).

Residues 10–85 (DKIEQKVIEM…DVIKYIKERQ (76 aa)) enclose the Carrier domain. O-(pantetheine 4'-phosphoryl)serine is present on S45.

The protein belongs to the acyl carrier protein (ACP) family. 4'-phosphopantetheine is transferred from CoA to a specific serine of apo-ACP by AcpS. This modification is essential for activity because fatty acids are bound in thioester linkage to the sulfhydryl of the prosthetic group.

The protein resides in the cytoplasm. It participates in lipid metabolism; fatty acid biosynthesis. Its function is as follows. Carrier of the growing fatty acid chain in fatty acid biosynthesis. This Rickettsia prowazekii (strain Madrid E) protein is Acyl carrier protein.